Consider the following 194-residue polypeptide: Probable GTP-binding protein EngB (194 aa).

The region spanning 22–194 is the EngB-type G domain; that stretch reads DLPEYALAGR…AWQFIKEGME (173 aa). GTP contacts are provided by residues 30 to 37, 57 to 61, 75 to 78, 142 to 145, and 174 to 176; these read GRSNVGKS, GKTQT, DVPG, TKAD, and FSS. Mg(2+)-binding residues include Ser37 and Thr59.

It belongs to the TRAFAC class TrmE-Era-EngA-EngB-Septin-like GTPase superfamily. EngB GTPase family. Requires Mg(2+) as cofactor.

Its function is as follows. Necessary for normal cell division and for the maintenance of normal septation. The protein is Probable GTP-binding protein EngB of Listeria monocytogenes serotype 4b (strain CLIP80459).